The primary structure comprises 512 residues: Oryzalexin E synthase (512 aa).

Residues 6 to 26 (SELWMTAVATCMSLLLYLTIL) form a helical membrane-spanning segment. Cys-452 provides a ligand contact to heme.

The protein belongs to the cytochrome P450 family. Heme serves as cofactor.

Its subcellular location is the membrane. The catalysed reaction is ent-sandaracopimaradien-3beta-ol + reduced [NADPH--hemoprotein reductase] + O2 = oryzalexin E + oxidized [NADPH--hemoprotein reductase] + H2O + H(+). In terms of biological role, enzyme of the diterpenoid metabolism involved in the biosynthesis of the oryzalexin class of phytoalexins. Can use ent-sandaracopimaradien and syn-stemodene as substrates, but no activity with syn-stemoden-19-oic acid. Hydroxylates 3-alpha-hydroxy-ent-sandaracopimaradiene at C-9-beta, resulting in a 3-alpha,9-beta-diol corresponding to oryzalexins E. The chain is Oryzalexin E synthase from Oryza sativa subsp. japonica (Rice).